The following is a 408-amino-acid chain: Imidazolonepropionase (408 aa).

Fe(3+) contacts are provided by histidine 74 and histidine 76. Positions 74 and 76 each coordinate Zn(2+). Residues arginine 83, tyrosine 146, and histidine 179 each coordinate 4-imidazolone-5-propanoate. Tyrosine 146 is an N-formimidoyl-L-glutamate binding site. Histidine 244 is a Fe(3+) binding site. Histidine 244 serves as a coordination point for Zn(2+). 4-imidazolone-5-propanoate is bound at residue glutamine 247. Aspartate 319 lines the Fe(3+) pocket. Position 319 (aspartate 319) interacts with Zn(2+). N-formimidoyl-L-glutamate is bound by residues asparagine 321 and glycine 323. Threonine 324 contributes to the 4-imidazolone-5-propanoate binding site.

It belongs to the metallo-dependent hydrolases superfamily. HutI family. Requires Zn(2+) as cofactor. Fe(3+) is required as a cofactor.

The protein localises to the cytoplasm. It carries out the reaction 4-imidazolone-5-propanoate + H2O = N-formimidoyl-L-glutamate. It functions in the pathway amino-acid degradation; L-histidine degradation into L-glutamate; N-formimidoyl-L-glutamate from L-histidine: step 3/3. In terms of biological role, catalyzes the hydrolytic cleavage of the carbon-nitrogen bond in imidazolone-5-propanoate to yield N-formimidoyl-L-glutamate. It is the third step in the universal histidine degradation pathway. The polypeptide is Imidazolonepropionase (Ralstonia nicotianae (strain ATCC BAA-1114 / GMI1000) (Ralstonia solanacearum)).